Here is a 209-residue protein sequence, read N- to C-terminus: Glutathione S-transferase (209 aa).

Residues 7–91 (FFFFFFFFFS…YLSKKYNISG (85 aa)) form the GST N-terminal domain. Residues 62-63 (QV), 75-76 (QS), D109, K121, and T125 each bind glutathione. The 117-residue stretch at 93–209 (GELNEFYADM…YIANRKESVY (117 aa)) folds into the GST C-terminal domain.

Belongs to the GST superfamily. In terms of assembly, homodimer. In the absence of ligands two homodimers may interact to form a tetramer.

The catalysed reaction is RX + glutathione = an S-substituted glutathione + a halide anion + H(+). Functionally, conjugation of reduced glutathione to a wide number of exogenous and endogenous hydrophobic electrophiles. May also function as a storage protein or ligandin for parasitotoxic ferriprotoporphyrin IX (hemin). In Plasmodium yoelii yoelii, this protein is Glutathione S-transferase.